The chain runs to 121 residues: Large ribosomal subunit protein bL12 (121 aa).

Belongs to the bacterial ribosomal protein bL12 family. In terms of assembly, homodimer. Part of the ribosomal stalk of the 50S ribosomal subunit. Forms a multimeric L10(L12)X complex, where L10 forms an elongated spine to which 2 to 4 L12 dimers bind in a sequential fashion. Binds GTP-bound translation factors.

In terms of biological role, forms part of the ribosomal stalk which helps the ribosome interact with GTP-bound translation factors. Is thus essential for accurate translation. This is Large ribosomal subunit protein bL12 from Serratia proteamaculans (strain 568).